Here is a 142-residue protein sequence, read N- to C-terminus: Putative pre-16S rRNA nuclease (142 aa).

This sequence belongs to the YqgF nuclease family.

The protein resides in the cytoplasm. Its function is as follows. Could be a nuclease involved in processing of the 5'-end of pre-16S rRNA. The polypeptide is Putative pre-16S rRNA nuclease (Staphylococcus aureus (strain JH1)).